A 132-amino-acid polypeptide reads, in one-letter code: MGFDVAGYLQSYSLKDWIRIIVYVGGYMLIRPYLMKLGAKIQEREHRKSLLEGEVDGTLDPEMTHGTKPKEHGEFDTDDEEEEENPDAEFRWGYSARRRIRKQREEYFKNQDKSPLDAYADDDEDIEEHLED.

Residues 17–34 (WIRIIVYVGGYMLIRPYL) traverse the membrane as a helical segment. Disordered stretches follow at residues 50–90 (LLEG…DAEF) and 106–132 (EYFK…HLED). A compositionally biased stretch (basic and acidic residues) spans 62–75 (EMTHGTKPKEHGEF). Residues 76–87 (DTDDEEEEENPD) show a composition bias toward acidic residues. A Phosphothreonine modification is found at threonine 77. A compositionally biased stretch (basic and acidic residues) spans 106-115 (EYFKNQDKSP). Acidic residues predominate over residues 119–132 (YADDDEDIEEHLED).

This sequence belongs to the PGA2 family.

The protein resides in the endoplasmic reticulum membrane. It localises to the nucleus membrane. Its function is as follows. Involved processing and trafficking glycosylated proteins. This is PGA2-homolog C27.01c from Schizosaccharomyces pombe (strain 972 / ATCC 24843) (Fission yeast).